The primary structure comprises 260 residues: Carbonic anhydrase (260 aa).

Residues 1-31 are disordered; it reads MAHAWGYGPADGPESWAESFPIANGPRQSPI. The Alpha-carbonic anhydrase domain maps to 3-259; it reads HAWGYGPADG…LKGRKVRASF (257 aa). The active-site Proton acceptor is the histidine 64. The Zn(2+) site is built by histidine 94, histidine 96, and histidine 119. Residue tyrosine 127 is part of the active site. Substrate is bound at residue 198-199; the sequence is TT.

It belongs to the alpha-carbonic anhydrase family. Zn(2+) serves as cofactor.

It carries out the reaction hydrogencarbonate + H(+) = CO2 + H2O. Its function is as follows. Reversible hydration of carbon dioxide. The polypeptide is Carbonic anhydrase (cahz) (Danio rerio (Zebrafish)).